The sequence spans 572 residues: Hemagglutinin-neuraminidase (572 aa).

The Intravirion portion of the chain corresponds to 1–31 (MEYWKHTNHGKDAGNELETSMATHGNKITNK). The chain crosses the membrane as a helical span at residues 32–52 (ITYILWTIILVLLSIVFIIVL). Residues 53–572 (INSIKSEKAH…FKTEIPKSCS (520 aa)) are Virion surface-facing. 2 disulfides stabilise this stretch: C190-C214 and C256-C269. The segment at 252 to 257 (NRKSCS) is involved in neuraminidase activity. 2 N-linked (GlcNAc...) asparagine; by host glycosylation sites follow: N308 and N351. Intrachain disulfides connect C355–C469 and C463–C473. An N-linked (GlcNAc...) asparagine; by host glycan is attached at N523. An intrachain disulfide couples C535 to C544.

It belongs to the paramyxoviruses hemagglutinin-neuraminidase family. Homotetramer; composed of disulfide-linked homodimers. Interacts with F protein trimer.

It localises to the virion membrane. Its subcellular location is the host cell membrane. The enzyme catalyses Hydrolysis of alpha-(2-&gt;3)-, alpha-(2-&gt;6)-, alpha-(2-&gt;8)- glycosidic linkages of terminal sialic acid residues in oligosaccharides, glycoproteins, glycolipids, colominic acid and synthetic substrates.. Its function is as follows. Attaches the virus to sialic acid-containing cell receptors and thereby initiating infection. Binding of HN protein to the receptor induces a conformational change that allows the F protein to trigger virion/cell membranes fusion. In terms of biological role, neuraminidase activity ensures the efficient spread of the virus by dissociating the mature virions from the neuraminic acid containing glycoproteins. In Human parainfluenza 3 virus (strain Wash/47885/57) (HPIV-3), this protein is Hemagglutinin-neuraminidase (HN).